Consider the following 349-residue polypeptide: Holliday junction branch migration complex subunit RuvB (349 aa).

The segment at 1 to 185 is large ATPase domain (RuvB-L); sequence MSQEKERLIS…FGSIFRLDFY (185 aa). ATP is bound by residues L24, R25, G66, K69, T70, T71, 132 to 134, R175, Y185, and R222; that span reads EDY. T70 is a Mg(2+) binding site. The tract at residues 186–256 is small ATPAse domain (RuvB-S); it reads DEEAIHDIVR…IAAESLACLE (71 aa). Residues 259-349 form a head domain (RuvB-H) region; the sequence is KLGLDEIDHK…QQGLWTENGS (91 aa). DNA-binding residues include R314 and R319.

This sequence belongs to the RuvB family. In terms of assembly, homohexamer. Forms an RuvA(8)-RuvB(12)-Holliday junction (HJ) complex. HJ DNA is sandwiched between 2 RuvA tetramers; dsDNA enters through RuvA and exits via RuvB. An RuvB hexamer assembles on each DNA strand where it exits the tetramer. Each RuvB hexamer is contacted by two RuvA subunits (via domain III) on 2 adjacent RuvB subunits; this complex drives branch migration. In the full resolvosome a probable DNA-RuvA(4)-RuvB(12)-RuvC(2) complex forms which resolves the HJ.

It localises to the cytoplasm. The enzyme catalyses ATP + H2O = ADP + phosphate + H(+). Its function is as follows. The RuvA-RuvB-RuvC complex processes Holliday junction (HJ) DNA during genetic recombination and DNA repair, while the RuvA-RuvB complex plays an important role in the rescue of blocked DNA replication forks via replication fork reversal (RFR). RuvA specifically binds to HJ cruciform DNA, conferring on it an open structure. The RuvB hexamer acts as an ATP-dependent pump, pulling dsDNA into and through the RuvAB complex. RuvB forms 2 homohexamers on either side of HJ DNA bound by 1 or 2 RuvA tetramers; 4 subunits per hexamer contact DNA at a time. Coordinated motions by a converter formed by DNA-disengaged RuvB subunits stimulates ATP hydrolysis and nucleotide exchange. Immobilization of the converter enables RuvB to convert the ATP-contained energy into a lever motion, pulling 2 nucleotides of DNA out of the RuvA tetramer per ATP hydrolyzed, thus driving DNA branch migration. The RuvB motors rotate together with the DNA substrate, which together with the progressing nucleotide cycle form the mechanistic basis for DNA recombination by continuous HJ branch migration. Branch migration allows RuvC to scan DNA until it finds its consensus sequence, where it cleaves and resolves cruciform DNA. The chain is Holliday junction branch migration complex subunit RuvB from Dehalococcoides mccartyi (strain CBDB1).